The chain runs to 129 residues: Intraflagellar transport protein 20 homolog (129 aa).

Positions 89–121 (VLLQMTIRELTVEKERLRVELEAVRKIEKEQDE) form a coiled coil.

In terms of assembly, component of the IFT complex B composed of at least che-2, che-13, dyf-1, dyf-3, dyf-6, dyf-11, dyf-13, ift-20, ift-74, ift-81, ifta-2, osm-1, osm-5 and osm-6.

The protein resides in the cell projection. It is found in the cilium. Functionally, component of the intraflagellar transport (IFT) complex B required for transport of proteins in the motile cilium. Required for ciliary entrance and transport of specific ciliary cargo proteins such as che-3 which are related to motility. The sequence is that of Intraflagellar transport protein 20 homolog from Caenorhabditis elegans.